Consider the following 549-residue polypeptide: MGSRNSSSAGSGSLEPSEGLSRRGTGLRRSEEEEEEDEDVDLAQVLAYLLRRGQVRLVQGRGAANLQLIQALSDSEEEHDSAWDGRLGDRYNPPVDATPDTRELEYNEIKTQVGLATGRLGLRRTALQQSFPQMLHQRERGLCHRGSFSLGEQSRVMSHFLPNDLSFTDTYSQKAFCGIYSKDGQIFMSACQDQTIRLYDCRYGRFHKFKSIKARDVGWSVLDVAFTPDGNHFLYSSWSDYIHICNIYGEGDTHTALDLRPDERRFAVFSIAVSSDGREVLGGANDGCLYVFDREQNRRTLQIESHEDDVNAVAFADISSQILFSGGDDAICKVWDRRTMREDDPKPVGALAGHQDGITFIDSKGDARYLISNSKDQTIKLWDIRRFSSREGMEASRLAATQQNWDYRWQQVPKIAWKKLKLPGDSSLMTYRGHGVLHTLIRCRFSPAHSTGQQFIYSGCSTGKVVVYDLLSGHIVKKLTNHKACVRDVSWHPFEEKIVSSSWDGNLRLWQYRQAEYFQDDMPESDMNRVCSSGPTPVPCPSVAFSSPQ.

The segment covering 1 to 24 (MGSRNSSSAGSGSLEPSEGLSRRG) has biased composition (low complexity). The tract at residues 1–40 (MGSRNSSSAGSGSLEPSEGLSRRGTGLRRSEEEEEEDEDV) is disordered. Phosphoserine occurs at positions 73 and 75. WD repeat units lie at residues 170 to 210 (TYSQ…HKFK), 216 to 258 (DVGW…TALD), 263 to 302 (ERRF…RTLQ), 305 to 345 (SHED…EDDP), 353 to 392 (GHQD…SREG), 435 to 480 (GVLH…KKLT), and 481 to 520 (NHKA…YFQD).

Interacts with DDB1 and CUL4A.

The protein operates within protein modification; protein ubiquitination. In terms of biological role, may function as a substrate receptor for CUL4-DDB1 E3 ubiquitin-protein ligase complex. The chain is DDB1- and CUL4-associated factor 11 (Dcaf11) from Mus musculus (Mouse).